We begin with the raw amino-acid sequence, 78 residues long: Large ribosomal subunit protein bL28 (78 aa).

This sequence belongs to the bacterial ribosomal protein bL28 family.

The sequence is that of Large ribosomal subunit protein bL28 from Synechococcus sp. (strain JA-2-3B'a(2-13)) (Cyanobacteria bacterium Yellowstone B-Prime).